Consider the following 135-residue polypeptide: Sex-regulated protein janus-A (135 aa).

Lysine 37 is a binding site for substrate. Histidine 63 acts as the Proton acceptor in catalysis. Position 104 to 106 (104 to 106) interacts with substrate; it reads SQG.

This sequence belongs to the janus family.

JanA and janB regulate somatic sex differentiation. The polypeptide is Sex-regulated protein janus-A (janA) (Drosophila yakuba (Fruit fly)).